A 298-amino-acid polypeptide reads, in one-letter code: UTP--glucose-1-phosphate uridylyltransferase (298 aa).

This sequence belongs to the UDPGP type 2 family.

It catalyses the reaction alpha-D-glucose 1-phosphate + UTP + H(+) = UDP-alpha-D-glucose + diphosphate. The protein operates within carbohydrate metabolism; nucleotide-sugar metabolism. Its pathway is capsule biogenesis; capsule polysaccharide biosynthesis. This Klebsiella pneumoniae protein is UTP--glucose-1-phosphate uridylyltransferase (galF).